The primary structure comprises 158 residues: Transcription elongation factor GreA (158 aa).

Positions 14–76 form a coiled coil; sequence LDQLKDELTH…EIESILKNVK (63 aa).

Belongs to the GreA/GreB family.

In terms of biological role, necessary for efficient RNA polymerase transcription elongation past template-encoded arresting sites. The arresting sites in DNA have the property of trapping a certain fraction of elongating RNA polymerases that pass through, resulting in locked ternary complexes. Cleavage of the nascent transcript by cleavage factors such as GreA or GreB allows the resumption of elongation from the new 3'terminus. GreA releases sequences of 2 to 3 nucleotides. The polypeptide is Transcription elongation factor GreA (Acholeplasma laidlawii (strain PG-8A)).